Here is a 407-residue protein sequence, read N- to C-terminus: 4-hydroxy-3-methylbut-2-en-1-yl diphosphate synthase (flavodoxin) (407 aa).

C296, C299, C342, and E349 together coordinate [4Fe-4S] cluster.

This sequence belongs to the IspG family. [4Fe-4S] cluster serves as cofactor.

It carries out the reaction (2E)-4-hydroxy-3-methylbut-2-enyl diphosphate + oxidized [flavodoxin] + H2O + 2 H(+) = 2-C-methyl-D-erythritol 2,4-cyclic diphosphate + reduced [flavodoxin]. It functions in the pathway isoprenoid biosynthesis; isopentenyl diphosphate biosynthesis via DXP pathway; isopentenyl diphosphate from 1-deoxy-D-xylulose 5-phosphate: step 5/6. In terms of biological role, converts 2C-methyl-D-erythritol 2,4-cyclodiphosphate (ME-2,4cPP) into 1-hydroxy-2-methyl-2-(E)-butenyl 4-diphosphate. The chain is 4-hydroxy-3-methylbut-2-en-1-yl diphosphate synthase (flavodoxin) from Methylococcus capsulatus (strain ATCC 33009 / NCIMB 11132 / Bath).